The chain runs to 180 residues: Large ribosomal subunit protein uL5 (180 aa).

Belongs to the universal ribosomal protein uL5 family. In terms of assembly, part of the 50S ribosomal subunit; part of the 5S rRNA/L5/L18/L25 subcomplex. Contacts the 5S rRNA and the P site tRNA. Forms a bridge to the 30S subunit in the 70S ribosome.

Its function is as follows. This is one of the proteins that bind and probably mediate the attachment of the 5S RNA into the large ribosomal subunit, where it forms part of the central protuberance. In the 70S ribosome it contacts protein S13 of the 30S subunit (bridge B1b), connecting the 2 subunits; this bridge is implicated in subunit movement. Contacts the P site tRNA; the 5S rRNA and some of its associated proteins might help stabilize positioning of ribosome-bound tRNAs. The sequence is that of Large ribosomal subunit protein uL5 from Streptococcus mutans serotype c (strain ATCC 700610 / UA159).